The chain runs to 144 residues: Granulocyte-macrophage colony-stimulating factor (144 aa).

Positions 1–17 are cleaved as a signal peptide; that stretch reads MWLQNLLFLNTVVCSIS. O-linked (GalNAc...) serine glycans are attached at residues S22 and S24. A glycan (O-linked (GalNAc...) threonine) is linked at T27. Residues N44, N45, and N54 are each glycosylated (N-linked (GlcNAc...) asparagine). Intrachain disulfides connect C71–C113 and C105–C138.

Belongs to the GM-CSF family. Monomer. The signaling GM-CSF receptor complex is a dodecamer of two head-to-head hexamers of two alpha, two beta, and two ligand subunits.

The protein localises to the secreted. Cytokine that stimulates the growth and differentiation of hematopoietic precursor cells from various lineages, including granulocytes, macrophages, eosinophils and erythrocytes. The sequence is that of Granulocyte-macrophage colony-stimulating factor (CSF2) from Felis catus (Cat).